The following is a 519-amino-acid chain: Spermidine/putrescine import ATP-binding protein PotA (519 aa).

The ABC transporter domain maps to 6 to 401; sequence LHLRDITKIY…PNSLWVANFI (396 aa). 39–46 is an ATP binding site; sequence GPSGCGKT. Positions 107–270 are insert; the sequence is RKPKDNVDQS…EQFENKNITR (164 aa).

Belongs to the ABC transporter superfamily. Spermidine/putrescine importer (TC 3.A.1.11.1) family. As to quaternary structure, the complex is composed of two ATP-binding proteins (PotA), two transmembrane proteins (PotB and PotC) and a solute-binding protein (PotD).

The protein resides in the cell membrane. It carries out the reaction ATP + H2O + polyamine-[polyamine-binding protein]Side 1 = ADP + phosphate + polyamineSide 2 + [polyamine-binding protein]Side 1.. In terms of biological role, part of the ABC transporter complex PotABCD involved in spermidine/putrescine import. Responsible for energy coupling to the transport system. The polypeptide is Spermidine/putrescine import ATP-binding protein PotA (Ureaplasma parvum serovar 3 (strain ATCC 700970)).